The primary structure comprises 389 residues: Cellobiose 2-epimerase (389 aa).

The protein belongs to the cellobiose 2-epimerase family. In terms of assembly, monomer.

It carries out the reaction D-cellobiose = beta-D-glucosyl-(1-&gt;4)-D-mannopyranose. Its function is as follows. Catalyzes the reversible epimerization of cellobiose to 4-O-beta-D-glucopyranosyl-D-mannose (Glc-Man). Catalyzes epimerization but also isomerization for beta-1,4- and alpha-1,4-gluco-oligosaccharides. Can use cellobiose, lactose, cellotriose, maltose and maltotriose. This is Cellobiose 2-epimerase from Dictyoglomus turgidum (strain DSM 6724 / Z-1310).